Here is a 269-residue protein sequence, read N- to C-terminus: Tryptophan synthase alpha chain (269 aa).

Active-site proton acceptor residues include Glu49 and Asp60.

It belongs to the TrpA family. In terms of assembly, tetramer of two alpha and two beta chains.

It carries out the reaction (1S,2R)-1-C-(indol-3-yl)glycerol 3-phosphate + L-serine = D-glyceraldehyde 3-phosphate + L-tryptophan + H2O. Its pathway is amino-acid biosynthesis; L-tryptophan biosynthesis; L-tryptophan from chorismate: step 5/5. Functionally, the alpha subunit is responsible for the aldol cleavage of indoleglycerol phosphate to indole and glyceraldehyde 3-phosphate. This chain is Tryptophan synthase alpha chain, found in Actinobacillus pleuropneumoniae serotype 3 (strain JL03).